The primary structure comprises 608 residues: Growth hormone receptor (608 aa).

The N-terminal stretch at Met-1 to Asn-16 is a signal peptide. Topologically, residues Asp-17–Glu-237 are extracellular. Disulfide bonds link Cys-34–Cys-44 and Cys-72–Cys-83. Asn-86 carries an N-linked (GlcNAc...) asparagine glycan. A disulfide bridge links Cys-97 with Cys-111. Residues Pro-122 to Gly-226 form the Fibronectin type-III domain. N-linked (GlcNAc...) asparagine glycosylation is found at Asn-127, Asn-132, and Asn-171. Positions Phe-211–Ser-215 match the WSXWS motif motif. The chain crosses the membrane as a helical span at residues Phe-238–Ser-261. At Lys-262–Pro-608 the chain is on the cytoplasmic side. Residues Lys-267 to Ala-352 form a required for JAK2 binding region. The Box 1 motif motif lies at Ile-270–Lys-278. The UbE motif signature appears at Asp-313 to Asp-322. 2 stretches are compositionally biased toward polar residues: residues Ala-413 to Ser-426 and Ser-438 to Ser-451. Residues Ala-413–Ser-451 are disordered.

This sequence belongs to the type I cytokine receptor family. Type 1 subfamily. In terms of processing, on GH binding, proteolytically cleaved, in vitro, to produce GHBP. As to expression, broad specificity.

It localises to the cell membrane. Its subcellular location is the secreted. Its function is as follows. Receptor for pituitary gland growth hormone (GH1) involved in regulating postnatal body growth. On ligand binding, couples to the JAK2/STAT5 pathway. Functionally, the soluble form (GHBP) acts as a reservoir of growth hormone in plasma and may be a modulator/inhibitor of GH signaling. The sequence is that of Growth hormone receptor (GHR) from Gallus gallus (Chicken).